The chain runs to 290 residues: Bifunctional protein FolD 3 (290 aa).

NADP(+) contacts are provided by residues 163–165 and Ile229; that span reads GHS.

It belongs to the tetrahydrofolate dehydrogenase/cyclohydrolase family. As to quaternary structure, homodimer.

It catalyses the reaction (6R)-5,10-methylene-5,6,7,8-tetrahydrofolate + NADP(+) = (6R)-5,10-methenyltetrahydrofolate + NADPH. The catalysed reaction is (6R)-5,10-methenyltetrahydrofolate + H2O = (6R)-10-formyltetrahydrofolate + H(+). Its pathway is one-carbon metabolism; tetrahydrofolate interconversion. Functionally, catalyzes the oxidation of 5,10-methylenetetrahydrofolate to 5,10-methenyltetrahydrofolate and then the hydrolysis of 5,10-methenyltetrahydrofolate to 10-formyltetrahydrofolate. The chain is Bifunctional protein FolD 3 from Roseobacter denitrificans (strain ATCC 33942 / OCh 114) (Erythrobacter sp. (strain OCh 114)).